The following is a 198-amino-acid chain: NADH-quinone oxidoreductase subunit I (198 aa).

4Fe-4S ferredoxin-type domains lie at 42–72 (LNRW…VEGA) and 88–117 (RVYE…MTND). [4Fe-4S] cluster contacts are provided by Cys-52, Cys-55, Cys-58, Cys-62, Cys-97, Cys-100, Cys-103, and Cys-107. Residues 137–198 (APLKEGMEQP…DTQHKDEEAA (62 aa)) are disordered. The span at 182–198 (AHRDDDNDTQHKDEEAA) shows a compositional bias: basic and acidic residues.

It belongs to the complex I 23 kDa subunit family. As to quaternary structure, NDH-1 is composed of 14 different subunits. Subunits NuoA, H, J, K, L, M, N constitute the membrane sector of the complex. It depends on [4Fe-4S] cluster as a cofactor.

Its subcellular location is the cell membrane. It catalyses the reaction a quinone + NADH + 5 H(+)(in) = a quinol + NAD(+) + 4 H(+)(out). Its function is as follows. NDH-1 shuttles electrons from NADH, via FMN and iron-sulfur (Fe-S) centers, to quinones in the respiratory chain. The immediate electron acceptor for the enzyme in this species is believed to be ubiquinone. Couples the redox reaction to proton translocation (for every two electrons transferred, four hydrogen ions are translocated across the cytoplasmic membrane), and thus conserves the redox energy in a proton gradient. This chain is NADH-quinone oxidoreductase subunit I, found in Cutibacterium acnes (strain DSM 16379 / KPA171202) (Propionibacterium acnes).